Consider the following 95-residue polypeptide: Cobalt transport protein CbiN (95 aa).

2 consecutive transmembrane segments (helical) span residues 5–25 (HILM…IYSG) and 67–87 (LLFA…FGYY).

Belongs to the CbiN family. Forms an energy-coupling factor (ECF) transporter complex composed of an ATP-binding protein (A component, CbiO), a transmembrane protein (T component, CbiQ) and 2 possible substrate-capture proteins (S components, CbiM and CbiN) of unknown stoichimetry.

It is found in the cell membrane. The protein operates within cofactor biosynthesis; adenosylcobalamin biosynthesis. Its function is as follows. Part of the energy-coupling factor (ECF) transporter complex CbiMNOQ involved in cobalt import. This is Cobalt transport protein CbiN from Methanothermobacter thermautotrophicus (strain ATCC 29096 / DSM 1053 / JCM 10044 / NBRC 100330 / Delta H) (Methanobacterium thermoautotrophicum).